The following is a 1706-amino-acid chain: Serine/threonine-protein kinase vps15 (1706 aa).

The Protein kinase domain occupies 24–293 (YHNERSLGDS…YLQKYRGTVF (270 aa)). Residues 30–38 (LGDSHFLRT) and K52 each bind ATP. The HEAT 1 repeat unit spans residues 56-94 (NKLPEISLSSIVNLLKEEQENISYRVPNAVPYIKTLVTL). The Proton acceptor role is filled by D146. HEAT repeat units lie at residues 426-465 (LYGA…NICD), 466-504 (ESKL…NVTS), 511-549 (FLFQ…QASK), 587-625 (HDLV…FFGK), 626-664 (AKSN…FIGP), 665-703 (RSVD…LHLF), and 705-743 (KLVV…SFDD). Residue S957 is modified to Phosphoserine. The residue at position 958 (Y958) is a Phosphotyrosine. Residues 982-1099 (TTKPKDVSQS…GKSLAPLISS (118 aa)) form a disordered region. Composition is skewed to basic and acidic residues over residues 984–1002 (KPKD…RESN) and 1014–1023 (DVYRQTDNPE). Positions 1029–1055 (DTASSKVDTHNPTVTQPTDDTGGLNSY) are enriched in polar residues. A compositionally biased stretch (low complexity) spans 1056–1069 (NTENPLLTNNTLEP). A compositionally biased stretch (basic and acidic residues) spans 1079-1090 (KDSDKHAKESKG). 2 WD repeats span residues 1213-1252 (LLDG…RHIS) and 1368-1407 (LQCG…LSCS). Residues 1431–1442 (NEYTSGNNNSPV) show a composition bias toward polar residues. The disordered stretch occupies residues 1431–1461 (NEYTSGNNNSPVTKVPGSSSTSSSSTQPINS). The stretch at 1577–1622 (CISSPIYRYRGPSAGSVEREPLFLIAASGSPHAFIWNPHNVSASSS) is one WD 3 repeat.

Belongs to the protein kinase superfamily. Ser/Thr protein kinase family. In terms of assembly, component of the autophagy-specific vps34 PI3-kinase complex I composed of vps15, atg6, pik3/vps34, atg14 and atg38. Also a component of the vps34 PI3-kinase complex II composed of atg6, pik3, vps15 and vps38.

The enzyme catalyses L-seryl-[protein] + ATP = O-phospho-L-seryl-[protein] + ADP + H(+). It carries out the reaction L-threonyl-[protein] + ATP = O-phospho-L-threonyl-[protein] + ADP + H(+). Functions as a part of the autophagy-specific VPS34 PI3-kinase complex I that plays a role in autophagosome assembly. This complex is essential to recruit the atg8-phosphatidylinositol conjugate and the atg12-atg5 conjugate to the pre-autophagosomal structure. Also functions as part of the VPS34 PI3-kinase complex II. The protein is Serine/threonine-protein kinase vps15 of Schizosaccharomyces pombe (strain 972 / ATCC 24843) (Fission yeast).